The chain runs to 220 residues: MAIIMAESSYERRIKALYEKQIRMEALEGKFIKKVFKFNSVLLDIKETSARHQRKVGKMQKVVTERREELGRRVTFMGHLTQEVEAIKLRNLAMKDQIKQQKMLNNQRKNEIMERIHTLSKTTGTYVNQEALPARVKGVTVIPGDRRNQLIPFDLNATDDEGLNSLCQHLESLNVDVSQWQQLVSLAMDVALGARAPTTPPKEAANCKSIIEIDLTSPTS.

The stretch at 79–114 forms a coiled coil; it reads HLTQEVEAIKLRNLAMKDQIKQQKMLNNQRKNEIME.

Belongs to the SPC25 family. In terms of assembly, component of the Ndc80 complex, which is composed of Ndc80, Nuf2 and Spc25.

It is found in the nucleus. Its subcellular location is the chromosome. The protein resides in the centromere. It localises to the kinetochore. In terms of biological role, acts as a component of the essential kinetochore-associated Ndc80 complex, which is required for chromosome segregation and spindle checkpoint activity during meiosis and mitosis. Required for kinetochore integrity and the organization of stable microtubule binding sites in the outer plate of the kinetochore. Participates in SAC signaling that responds specifically to disruptions in spindle microtubule dynamics. The NDC80 complex synergistically enhances the affinity of the SKA1 complex for microtubules and may allow the NDC80 complex to track depolymerizing microtubules. This Drosophila orena (Fruit fly) protein is Kinetochore protein Spc25.